Here is a 355-residue protein sequence, read N- to C-terminus: MSDALRLDTCLDQIASQLPALTASCRVVEALAGAARQIAHLLARGPLSGDLGAVIGESLDGDGQKALDAITHALVREAVIASGAAAFASEEAAAPEWLDPVGEVAVAVDPLDGSSNIDTLAPVGTIFSILPARHASGADPASPFLQTGRRQLAAGFFIYGPRTALAVTFGNGTRIFTLDPVSGAFLAPAPPATVPAATREYAINGSNLRHWEEPIRDYIVELKQGRNGPRGIDFNTRWLASMVGDAFRILGRGGIYLYPADERQGYEAGRLRLVYEANPIAFLMEQAGASATDGRIPILDLQPAHIHQRCPLVFGSADEVRRVAQAYERAGQPSSPLFRRRSLFRSTSNVAELFA.

4 residues coordinate Mg(2+): E90, D109, L111, and D112. Residues 112 to 115 (DGSS), N204, and 256 to 258 (YLY) each bind substrate. A Mg(2+)-binding site is contributed by E276.

Belongs to the FBPase class 1 family. As to quaternary structure, homotetramer. Mg(2+) is required as a cofactor.

Its subcellular location is the cytoplasm. The catalysed reaction is beta-D-fructose 1,6-bisphosphate + H2O = beta-D-fructose 6-phosphate + phosphate. The protein operates within carbohydrate biosynthesis; gluconeogenesis. This Acidiphilium cryptum (strain JF-5) protein is Fructose-1,6-bisphosphatase class 1.